The sequence spans 314 residues: BTB/POZ domain-containing protein KCTD17 (314 aa).

The BTB domain maps to 24 to 94 (KWVRLNVGGT…LRHGKLVLDK (71 aa)). Residues 190–268 (STPNGLSSES…PAGGSRPHPL (79 aa)) are disordered. A coiled-coil region spans residues 196-239 (SSESSRKTKSTEEQLEEQQQQEEEVEEVEVEQVQVEADAQEKAQ). Positions 208–225 (EQLEEQQQQEEEVEEVEV) are enriched in acidic residues.

Homopentamer; forms a closed pentamer. Interacts with CUL3; interaction is direct and forms a 5:5 heterodecamer. Interacts with TCHP. Interacts with CUL3, as part of the BCR(KCTD17) E3 ubiquitin ligase complex, at least composed of CUL3, KCTD17 and RBX1. In terms of tissue distribution, highly expressed in brain. Highest expression is observed in the putamen and the thalamus.

Its subcellular location is the cytoplasm. Substrate-adapter for CUL3-RING ubiquitin ligase complexes which mediates the ubiquitination and subsequent proteasomal degradation of TCHP, a protein involved in ciliogenesis down-regulation. Thereby, positively regulates ciliogenesis, playing a crucial role in the initial steps of axoneme extension. May also play a role in endoplasmic reticulum calcium ion homeostasis. The sequence is that of BTB/POZ domain-containing protein KCTD17 from Homo sapiens (Human).